Consider the following 161-residue polypeptide: Cytochrome c-type biogenesis protein CcmE (161 aa).

The Cytoplasmic segment spans residues 1–8 (MNARRKKR). A helical; Signal-anchor for type II membrane protein membrane pass occupies residues 9-29 (LTLAVALIGGVAAIASLLLYA). Residues 30-161 (LNSNLNLFYT…DYNEQQKTSY (132 aa)) are Periplasmic-facing. The heme site is built by histidine 131 and tyrosine 135.

Belongs to the CcmE/CycJ family.

It is found in the cell inner membrane. Heme chaperone required for the biogenesis of c-type cytochromes. Transiently binds heme delivered by CcmC and transfers the heme to apo-cytochromes in a process facilitated by CcmF and CcmH. This Shewanella sediminis (strain HAW-EB3) protein is Cytochrome c-type biogenesis protein CcmE.